A 591-amino-acid chain; its full sequence is Trihelix transcription factor PTL (591 aa).

Residues 1–32 form a disordered region; the sequence is MDQDQHPQYGIPELRQLMKGGGRTTTTTPSTS. One can recognise a Myb-like 1 domain in the interval 118–177; it reads GRWPRQETLTLLEIRSRLDHKFKEANQKGPLWDEVSRIMSEEHGYQRSGKKCREKFENLY. Positions 380–410 are disordered; sequence CSSPEERTNGNNEIRNNSETQNENGSDQTMT. A compositionally biased stretch (polar residues) spans 388–410; that stretch reads NGNNEIRNNSETQNENGSDQTMT. Residues 422-479 enclose the Myb-like 2 domain; it reads WGEQEILKLMEIRTSMDSTFQEILGGCSDEFLWEEIAAKLIQLGFDQRSALLCKEKWE. The tract at residues 491–551 is disordered; it reads QINKKRKDNS…SNANANANVT (61 aa). A compositionally biased stretch (polar residues) spans 515–534; that stretch reads IYNNRESGYNDNDPHQINEQ. The segment covering 535–551 has biased composition (low complexity); sequence GNVGSSTSNANANANVT.

As to quaternary structure, interacts with KIN10. As to expression, confined to flowers, at low levels. Also present in 7-days-old seedlings. Barely detectable in other tissues such as young seedlings, roots, stems, leaves and siliques. Expressed in flower primordia, more precisely between newly arisen sepal primordia and also at the basal margins of developing sepals.

The protein localises to the nucleus. Functionally, transcription factor that prevents growth. Regulates perianth architecture in flower, mostly in the second whorl, probably by suppressing growth between initiating sepals, ensuring that they remain separate, and by modulating organ shapes. Required for the establishment of auxin flux. The protein is Trihelix transcription factor PTL (PTL) of Arabidopsis thaliana (Mouse-ear cress).